The sequence spans 99 residues: Turripeptide OL71 (99 aa).

Contains 5 disulfide bonds. In terms of tissue distribution, expressed by the venom duct.

Its subcellular location is the secreted. Acts as a neurotoxin by inhibiting an ion channel. This Iotyrris olangoensis (Sea snail) protein is Turripeptide OL71.